The primary structure comprises 214 residues: Non-structural protein NP-1 (214 aa).

2 disordered regions span residues M1–N85 and E192–N214. The span at S33–G43 shows a compositional bias: basic residues. Residues E44–Q55 show a composition bias toward basic and acidic residues. The span at D56–A71 shows a compositional bias: polar residues. A compositionally biased stretch (acidic residues) spans E192–M201.

It belongs to the Bocaparvovirus Non-structural protein NP-1 family.

It is found in the host nucleus. In terms of biological role, required for the expression of the capsid proteins. Performs the splicing and internal polyadenylation of the viral capsid-encoding mRNA precursor, which allows its maturation and expression. Transactivates the viral promoter. In Human bocavirus 4 (HBoV4), this protein is Non-structural protein NP-1 (NP1).